The sequence spans 214 residues: MDRTIADLRKDYTLEGLSEIEVDPNPFIQFKKWFEQALAAQLPEPNAMTIATSTPDGQPSARMVLLKDFDEQGFVFFTNYNSRKGQELAENPQAALVFWWAELERQVRISGRVEKVSESESDYYFYSRPANSRLGAWVSNQSEIIASREVLEQRMQEFQHKYENQEIPRPAHWGGLRVIPSEIEFWQGRSSRLHDRLLYTLLNDHSWEIHRLSP.

Residues 9 to 12 and K67 each bind substrate; that span reads RKDY. FMN-binding positions include 62 to 67, 77 to 78, R83, K84, and Q106; these read RMVLLK and FT. Residues Y124, R128, and S132 each coordinate substrate. Residues 141–142 and W186 contribute to the FMN site; that span reads QS. A substrate-binding site is contributed by 192-194; sequence RLH. R196 serves as a coordination point for FMN.

The protein belongs to the pyridoxamine 5'-phosphate oxidase family. As to quaternary structure, homodimer. FMN is required as a cofactor.

It carries out the reaction pyridoxamine 5'-phosphate + O2 + H2O = pyridoxal 5'-phosphate + H2O2 + NH4(+). It catalyses the reaction pyridoxine 5'-phosphate + O2 = pyridoxal 5'-phosphate + H2O2. It participates in cofactor metabolism; pyridoxal 5'-phosphate salvage; pyridoxal 5'-phosphate from pyridoxamine 5'-phosphate: step 1/1. It functions in the pathway cofactor metabolism; pyridoxal 5'-phosphate salvage; pyridoxal 5'-phosphate from pyridoxine 5'-phosphate: step 1/1. Catalyzes the oxidation of either pyridoxine 5'-phosphate (PNP) or pyridoxamine 5'-phosphate (PMP) into pyridoxal 5'-phosphate (PLP). The protein is Pyridoxine/pyridoxamine 5'-phosphate oxidase of Nostoc sp. (strain PCC 7120 / SAG 25.82 / UTEX 2576).